The chain runs to 254 residues: MERLEEARKRLEEAKRVAVLTGAGISKPSGIPTFRDAEGLWKNFNPLDYATPEAYARDPEKVWAWYAWRIQKVREAKPNPAHYALVELERRILSRGGSFLLVTQNVDGLHARAGSQNLVELHGNLLRARCEACGKRFPLPEAFAPPPFCPACGHRARPDVVWFGELLPEGAWERAERAFAEADFALVVGTSAEVEPAASLGRIAFASGAYLVEVNPEPTPLTPLAHLSLRTGAVEGMALLLPPSPEDQAEGHLS.

In terms of domain architecture, Deacetylase sirtuin-type spans 1-250; that stretch reads MERLEEARKR…LPPSPEDQAE (250 aa). 22 to 41 contributes to the NAD(+) binding site; it reads GAGISKPSGIPTFRDAEGLW. Tyr66 and Arg69 together coordinate substrate. Residue 104-107 coordinates NAD(+); sequence QNVD. His122 (proton acceptor) is an active-site residue. Residues Cys130, Cys133, Cys149, and Cys152 each contribute to the Zn(2+) site. Residues 189 to 191, 215 to 217, and Ala233 each bind NAD(+); these read GTS and NPE.

The protein belongs to the sirtuin family. Class III subfamily. Requires Zn(2+) as cofactor.

Its subcellular location is the cytoplasm. The enzyme catalyses N(6)-acetyl-L-lysyl-[protein] + NAD(+) + H2O = 2''-O-acetyl-ADP-D-ribose + nicotinamide + L-lysyl-[protein]. It catalyses the reaction N(6)-succinyl-L-lysyl-[protein] + NAD(+) + H2O = 2''-O-succinyl-ADP-D-ribose + nicotinamide + L-lysyl-[protein]. Functionally, NAD-dependent lysine deacetylase and desuccinylase that specifically removes acetyl and succinyl groups on target proteins. Modulates the activities of several proteins which are inactive in their acylated form. This Thermus thermophilus (strain ATCC BAA-163 / DSM 7039 / HB27) protein is NAD-dependent protein deacylase.